We begin with the raw amino-acid sequence, 370 residues long: 3-dehydroquinate synthase (370 aa).

NAD(+) is bound by residues 112 to 116 (GVIGD), 136 to 137 (TT), lysine 149, lysine 158, and 176 to 179 (TLAT). Zn(2+) is bound by residues glutamate 191, histidine 254, and histidine 276.

Belongs to the sugar phosphate cyclases superfamily. Dehydroquinate synthase family. Co(2+) is required as a cofactor. Requires Zn(2+) as cofactor. NAD(+) serves as cofactor.

It localises to the cytoplasm. It carries out the reaction 7-phospho-2-dehydro-3-deoxy-D-arabino-heptonate = 3-dehydroquinate + phosphate. It participates in metabolic intermediate biosynthesis; chorismate biosynthesis; chorismate from D-erythrose 4-phosphate and phosphoenolpyruvate: step 2/7. Its function is as follows. Catalyzes the conversion of 3-deoxy-D-arabino-heptulosonate 7-phosphate (DAHP) to dehydroquinate (DHQ). This chain is 3-dehydroquinate synthase, found in Xylella fastidiosa (strain M12).